The chain runs to 60 residues: Mastoparan-A (60 aa).

An N-terminal signal peptide occupies residues 1–27 (MKNTILILFTAFIALLGFFGMSAEALA). 4 AXPX repeats span residues 27-30 (ADPI), 31-34 (ADPL), 35-38 (AGPN), and 41-43 (ADP). A propeptide spanning residues 28 to 45 (DPIADPLAGPNAEADPEA) is cleaved from the precursor. Isoleucine amide is present on Ile59.

It belongs to the MCD family. Mastoparan subfamily. As to expression, expressed by the venom gland.

The protein localises to the secreted. The protein resides in the target cell membrane. Its function is as follows. Antimicrobial and mast cell degranulating peptide. Has broad spectrum antibacterial activity against both Gram-positive and Gram-negative bacteria (S.aureus MIC=32-64 ug/ml, S.xylosus MIC=2 ug/ml, S.alactolyticus MIC=12 ug/ml, C.koseri MIC=4 ug/ml, E.coli MIC=8 ug/ml, K.pneumoniae MIC=32 ug/ml, P.aerugiosa MIC=192 ug/ml, S.choleraesuis MIC=32 ug/ml, S.typhimurium MIC=32 ug/ml, V.parahamelytics MIC=16 ug/ml). Affects membrane permeability of E.coli. Shows hemolytic activities on sheep, chicken and human erythrocytes. Its mast cell degranulation activity may be related to the activation of G-protein coupled receptors in mast cells as well as interaction with other proteins located in cell endosomal membranes in the mast cells. The chain is Mastoparan-A from Vespa analis (Yellow-vented hornet).